A 364-amino-acid chain; its full sequence is Putative galactoside 2-alpha-L-fucosyltransferase svh-11 (364 aa).

Residues 1–19 lie on the Cytoplasmic side of the membrane; the sequence is MRLFHFLKFLTINNFSRYC. A helical; Signal-anchor for type II membrane protein transmembrane segment spans residues 20–42; that stretch reads LKIVKVHIIWITIICIIYFNWRF. The Lumenal segment spans residues 43–364; sequence KKLDFMAIPY…SANSFTVVRS (322 aa). Residues Asn-60 and Asn-128 are each glycosylated (N-linked (GlcNAc...) asparagine).

This sequence belongs to the glycosyltransferase 11 family.

It localises to the golgi apparatus. The protein localises to the golgi stack membrane. Its function is as follows. Mediates the transfer of fucose to the terminal galactose on glycan chains of cell surface glycoproteins and glycolipids. Required for axon regeneration after injury. This Caenorhabditis elegans protein is Putative galactoside 2-alpha-L-fucosyltransferase svh-11.